The following is a 160-amino-acid chain: ATP synthase subunit delta, mitochondrial (160 aa).

Residues 1–22 (MFRQSLRSIARTRTGTIGVRTY) constitute a mitochondrion transit peptide.

As to quaternary structure, F-type ATP synthases have 2 components, the catalytic core F(1) and the membrane-embedded component F(0), linked together by a central stalk and a peripheral stalk. The central stalk, also called rotor shaft, is often seen as part of F(1). The peripheral stalk is seen as part of F(0). F(0) contains the membrane channel next to the rotor. F-type ATP synthases form dimers but each monomer functions independently in ATP generation. The dimer consists of 18 different polypeptides: ATP1 (subunit alpha, part of F(1), 3 molecules per monomer), ATP2 (subunit beta, part of F(1), 3 molecules per monomer), ATP3 (subunit gamma, part of the central stalk), ATP4 (subunit b, part of the peripheral stalk), ATP5/OSCP (subunit 5/OSCP, part of the peripheral stalk), ATP6 (subunit a, part of the peripheral stalk), ATP7 (subunit d, part of the peripheral stalk), ATP8 (subunit 8, part of the peripheral stalk), OLI1 (subunit c, part of the rotor, 10 molecules per monomer), ATP14 (subunit h, part of the peripheral stalk), ATP15 (subunit epsilon, part of the central stalk), ATP16 (subunit delta, part of the central stalk), ATP17 (subunit f, part of the peripheral stalk), ATP18 (subunit i/j, part of the peripheral stalk). Dimer-specific subunits are ATP19 (subunit k, at interface between monomers), ATP20 (subunit g, at interface between monomers), TIM11 (subunit e, at interface between monomers). Also contains subunit L.

Its subcellular location is the mitochondrion inner membrane. In terms of biological role, mitochondrial membrane ATP synthase (F(1)F(0) ATP synthase or Complex V) produces ATP from ADP in the presence of a proton gradient across the membrane which is generated by electron transport complexes of the respiratory chain. F-type ATP synthases consist of two structural domains, F(1) - containing the extramembraneous catalytic core, and F(0) - containing the membrane proton channel, linked together by a central stalk and a peripheral stalk. During catalysis, ATP synthesis in the catalytic domain of F(1) is coupled via a rotary mechanism of the central stalk subunits to proton translocation. Part of the complex F(1) domain and the central stalk which is part of the complex rotary element. Rotation of the central stalk against the surrounding alpha/ATP1(3)beta/ATP2(3) subunits leads to hydrolysis of ATP in three separate catalytic sites on the beta/ATP2 subunits. The sequence is that of ATP synthase subunit delta, mitochondrial from Pichia angusta (Yeast).